The chain runs to 447 residues: MKNDNQTLKRTMTSRHIMMMALGGAIGAGLFKGSSSAIDVAGPSVIIAYLLGGIILLFIMQGLAEMAVRNRNARTFRDLVQQVLGNYAAYFLDWIYWKMWVLNIAAEAVVAAIFIQYWLPGCPIWVLALGISLIVTIVNLLSVKIFAETEYWLAMIKITVIIIFIILGLLLLFVSFGDHTASGFSNLTDHGGFFPHGGTGLITAMLVVIYSYGGTEIIGVTLAETKNPEKVVPKAVRSTLTRIVAFYLLPFFIIVSLIPWNQVNSVPESPFVMVFKMVGIPGADHIMNAVILLAIISSMNSGLYGSSRILYTQASDGRLPKVFSKLSSKNVPMFAILMCTSSLYIGVLISLFAGSQTFNYLMGSLGYTVLFIWLIIGFAHLKSRKQQTETPAYYVKWFPYTTWFAIVALLAILIGVIMTTSIVITGITAAIYLLITVAYLVKGRKHQ.

The next 12 helical transmembrane spans lie at 17 to 37 (IMMMALGGAIGAGLFKGSSSA), 40 to 60 (VAGPSVIIAYLLGGIILLFIM), 95 to 115 (IYWKMWVLNIAAEAVVAAIFI), 118 to 138 (WLPGCPIWVLALGISLIVTIV), 154 to 174 (AMIKITVIIIFIILGLLLLFV), 200 to 220 (GLITAMLVVIYSYGGTEIIGV), 243 to 263 (IVAFYLLPFFIIVSLIPWNQV), 289 to 311 (AVILLAIISSMNSGLYGSSRILY), 333 to 353 (MFAILMCTSSLYIGVLISLFA), 361 to 381 (LMGSLGYTVLFIWLIIGFAHL), 393 to 415 (YYVKWFPYTTWFAIVALLAILIG), and 419 to 441 (TTSIVITGITAAIYLLITVAYLV).

Belongs to the amino acid-polyamine-organocation (APC) superfamily.

It is found in the cell membrane. May participate in leucine metabolism. May transport leucine or a compound related to leucine metabolism. This is an uncharacterized protein from Bacillus subtilis (strain 168).